Here is a 131-residue protein sequence, read N- to C-terminus: Profilin (131 aa).

This sequence belongs to the profilin family. In terms of assembly, occurs in many kinds of cells as a complex with monomeric actin in a 1:1 ratio.

It is found in the cytoplasm. The protein localises to the cytoskeleton. Its function is as follows. Binds to actin and affects the structure of the cytoskeleton. At high concentrations, profilin prevents the polymerization of actin, whereas it enhances it at low concentrations. By binding to PIP2, it inhibits the formation of IP3 and DG. The sequence is that of Profilin from Prunus persica (Peach).